Consider the following 673-residue polypeptide: NADH-quinone oxidoreductase chain 3 (673 aa).

The region spanning 5 to 90 (RKIKIDDTII…PSEIRTNSPM (86 aa)) is the 2Fe-2S ferredoxin-type domain. [2Fe-2S] cluster is bound by residues cysteine 37, cysteine 48, cysteine 51, and cysteine 66. One can recognise a 4Fe-4S His(Cys)3-ligated-type domain in the interval 90–129 (MVKKAREGVMEFLLINHPLDCPICDQGGECDLQDQAMAYG). 8 residues coordinate [4Fe-4S] cluster: histidine 106, cysteine 110, cysteine 113, cysteine 119, cysteine 158, cysteine 161, cysteine 164, and cysteine 208. The 4Fe-4S Mo/W bis-MGD-type domain maps to 227–283 (LTKTESIDVMDALGSSIRIDTKGREVMRILPRNHDGVNEEWISDKTRFVWDGLRRQR).

The protein belongs to the complex I 75 kDa subunit family. NDH-1 is composed of at least 14 different subunits, Nqo1 to Nqo14. The complex has a L-shaped structure, with the hydrophobic arm (subunits Nqo7, Nqo8, Nqo10 to Nqo14) embedded in the inner membrane and the hydrophilic peripheral arm (subunits Nqo1 to Nqo6, Nqo9) protruding into the bacterial cytoplasm. The hydrophilic domain contains all the redox centers. It depends on [2Fe-2S] cluster as a cofactor. [4Fe-4S] cluster serves as cofactor.

It is found in the cell inner membrane. The enzyme catalyses a quinone + NADH + 5 H(+)(in) = a quinol + NAD(+) + 4 H(+)(out). In terms of biological role, NDH-1 shuttles electrons from NADH, via FMN and iron-sulfur (Fe-S) centers, to quinones in the respiratory chain. The immediate electron acceptor for the enzyme in this species is believed to be ubiquinone. Couples the redox reaction to proton translocation (for every two electrons transferred, four hydrogen ions are translocated across the cytoplasmic membrane), and thus conserves the redox energy in a proton gradient. This chain is NADH-quinone oxidoreductase chain 3, found in Paracoccus denitrificans.